The sequence spans 150 residues: Large ribosomal subunit protein uL15 (150 aa).

Residues 1–51 form a disordered region; the sequence is MKLHTLRPAKGSVKTSKRIGRGTGSGRGGTSTKGHKGAKSRSGYSSKIGFE. The span at 21–31 shows a compositional bias: gly residues; sequence RGTGSGRGGTS.

This sequence belongs to the universal ribosomal protein uL15 family. Part of the 50S ribosomal subunit.

Functionally, binds to the 23S rRNA. The polypeptide is Large ribosomal subunit protein uL15 (Cytophaga hutchinsonii (strain ATCC 33406 / DSM 1761 / CIP 103989 / NBRC 15051 / NCIMB 9469 / D465)).